A 378-amino-acid chain; its full sequence is Schlafen family member 2 (378 aa).

Belongs to the Schlafen family. In terms of tissue distribution, mainly expressed in the thymus, lymph node and spleen.

Its subcellular location is the cytoplasm. In terms of biological role, tRNA-binding protein involved in T-cell mediated immunity. Plays a key role during the metabolic reprograming phase of activated T-cell, when T-cells produce reactive oxygen species (ROS): acts by binding tRNAs and protecting them from cleavage by the oxidative stress-activated ribonuclease angiogenin (ANG). Also required for T-cell quiescence maintenance. This is Schlafen family member 2 from Mus musculus (Mouse).